The chain runs to 2572 residues: MSPFMEPQDEIMPIAVVGMSFRGPGDATNVENLLKMVAEGRESRSKIPKHKWNHEAFYHPDPSRYGSHNVEYGHWFQQDVTRFDAPFFNMTAAEAAALDPQQRMLLECTYEAMENSGTHMPNFVGTETSVFVGSFCTDYADVLWRDPETVPMYQCTNAGHSRANTANRISYSYDLKGPSVTVDTACSASLVALHLGCQSLLTGDAKQAIVAGSSAILSHEGMVTMSMMRLLSHEGRCYTFDERANGYARGDGVGVIFLKPLQDAVEAGDTIRAVIRGTGSNQDGKTPGITMPNGLAQEALIRHVYDRSGLDPLDTSYVECHGTGTQAGDTTETGALSRVFSPGRDEDDPLTIGSVKTNVGHLEGASGVTGVIKTILMLENSIILPNRNFQKANPRIPLKDWKLRVPIAIEPWSRPKPLRASVNSFGYGGANAHVIIESARDYLLSHGYDPSQAIRKSSLAVAPIQRAIAQCGPTRSGDDGIENGLSKSVNGNINGVNGIDAHEEDRARVFTLSAFDQAAGKGWVAALTEYLKQRRHIADEAFLDSLTYTLNERRTIHPWKATVIARSVDDLCVRLEGVHFVNVNPKQNLGFVFTGQGAQWCGMGKELIAIYPRFRKSLVACAAALERLGAPFDLLAEFEKDSKDSQINRALYSQPLCTALQIALVDLLGSWGIRPASVTGHSSGEIASAYTAGALSIEDAMLVSYSRGVASNDLASKGLTDGSMVAVGMSKEEALPILSSLSSGKAGVACSNSPSSITVSGDRAAIEELQAILEEKKIFNRKLVVEVAYHSHHMALVADQYRIAMSNIEVLKGNGIKFFSSVTGEQADISTLGPDYWVSNMVGEVKFNQSLHRLSSESGASTTASRKRNKLSPVHTLVEIGPHSALAGPIKQILQADDKLAKASIDYHTALARKKDAVESVLGLVSGLFVSGYSVDLSGINKLTMTKCSPLIDLPPYSWNHANSYSAESRISKFYRDRTFPRVDLLGVLERNSSSLEPRWRNHIRLSEIPWVHDHKIQSNIVYPAAGYITMAVEAAYQRAVQRSVTKIIGYRLREVVIGSALVVPENLGEVEVAITLKSFSESVKTPSDLWDEFVISSVTSDSRWTEHCRGLISVQTPQKSSNLVDGPAQEEADKKLYAELIKKYENNCRKEIDVSQFYDELTALGLEYGPTFANLRHLRSAPGECIGKIEIPDTAAVMPMQFQYPFVIHPATFDSFLHTIFVALAAQLGNLNDPAVPVSVDEVFIAHDISKKPGDVLNTYTSTSQKDYRYMSASIAVFGGTHEPANKPVVEIHDLTCATLERDGGGEADDEVPSRAYNLKWGPDVDLLSVDQLTKMCAAPPPPNAAFIRSKLERAAFYYLHSAVAAMSKASTPSAESDEYRQTLRGFLSSQVEFAMTKHHDHGWSSASESEKASLIEEVRASSGVGRTLCYAGEQLAKVVAGESSPSDLVQGLDFNAFVEDPHLFQNTRSAATYLDLVGHKNPNLSILTIGPQSGLASLGLLSLLSELEGSTPRFTAFHHTDSELNITDTVKEKFSAWANLIEFKDLAIHSDQSEENEVYDVVVAFHVLGSSNSLPETFSSSRRLLKPGGKLLLVGRALKSLVATVLWGSLPNVLSNQKHNEEISTSNVENLIQGSGFSISAALSSSTNKTNYGALFLSLVDEKPRKTHEKKALIIAEKDITGATLEQLRSQLSQSCIEVDVVSLQDARPTSQQACIILSEISSKVLADPSKSEWEAIKRLSLQSAGMIWVTNGAGSSLNPEANMAAGLLRTIRSETGDKPIITLDLEDLDGSVEYIMALFRHVFQSAVSPGEIDAEYTERSGILNIPRLVEDAQLTKHIGTSLQSKAAEIQPFDQPGRPLRMYVGTPGLLDTLHFTEDDRLEEDLPDDWVEMQIKASGINFKDVMMAMGQIKVENLGWECSGILTAVGKHVKGLKIGDRVVCHGSGTFATHSRGPAANAMKIPDNVTFETAAALPVTYVTAYHSIHNVARLQPGETILVHAATGGLGQAIVELCKLVGAEIFVTVGTPEKKRFVQEHFHIPEDHILWSRDNSFAKAVKRLTNGKGVDVVMNSLAGELLRLSWECIAPYGRFVELGQRDITVNSRLEMSHFARNASFTAFNLAYMVQYNPEVANDVFARVLHLFAQGAVKGPSPVEVYPFSQMEAAFRRMQTGGHMGKLVAVSRPGDMVKVIAQDKSKNMFRPDASYLLVGGLGGIGRATSQWMVQHGAKNIIFVNRSGLKTDEAKETVRVLDEAGCATTVFSCDITDAPSVEAFAEEAARSLPPIRGVIQGAMLLRDTMFEKMTLDDYRTVIRPKVHGTWNLHNFLPKDMDFFVMESSVSGIIGNTAQAAYAAGNTFLDAFASYRNSLGLPATTLDLGAISGVGYLAKNDELKQAMERQGFEFTDEKRLMRLIQFAIQNPRREGNLSHVITGLGTWQESNSLGALNTPMFSHFRRLASSGASSDNSANNLRKVLKESKTFDAASEAICDALVDKIASRSGLPIENVSTAKSMPDYGIDSLVAVELRNWIAKEMDSTIPILELMASDPLTGLAAKIAKRSRLVNVESGEDA.

One can recognise a Ketosynthase family 3 (KS3) domain in the interval 11–438; the sequence is IMPIAVVGMS…GANAHVIIES (428 aa). Active-site for beta-ketoacyl synthase activity residues include Cys186, His321, and His361. Residues 591-917 form the Malonyl-CoA:ACP transacylase (MAT) domain; it reads FVFTGQGAQW…HTALARKKDA (327 aa). The tract at residues 983–1120 is N-terminal hotdog fold; it reads VDLLGVLERN…GLISVQTPQK (138 aa). One can recognise a PKS/mFAS DH domain in the interval 983-1307; that stretch reads VDLLGVLERN…CATLERDGGG (325 aa). The active-site Proton acceptor; for dehydratase activity is His1015. A C-terminal hotdog fold region spans residues 1150-1307; the sequence is RKEIDVSQFY…CATLERDGGG (158 aa). Asp1215 acts as the Proton donor; for dehydratase activity in catalysis. Positions 1353-1654 are methyltransferase (CMeT) domain; the sequence is LERAAFYYLH…LSSSTNKTNY (302 aa). The Enoyl reductase (ER) domain maps to 1870–2182; the sequence is GLLDTLHFTE…TGGHMGKLVA (313 aa). The region spanning 2206–2383 is the Ketoreductase (KR) domain; sequence ASYLLVGGLG…ATTLDLGAIS (178 aa). The region spanning 2484–2561 is the Carrier domain; that stretch reads AASEAICDAL…GLAAKIAKRS (78 aa). The residue at position 2521 (Ser2521) is an O-(pantetheine 4'-phosphoryl)serine.

It depends on pantetheine 4'-phosphate as a cofactor.

The protein operates within secondary metabolite biosynthesis. Functionally, highly reducing polyketide synthase; part of the gene cluster that mediates the biosynthesis of the antihypercholesterolemic agents phomoidrides which are dimeric anhydrides. The pathway begins with the highly reducing polyketide synthase phiA that catalyzes the formation of a C12-fatty acyl-ACP, starting from one acetate and 5 malonate units. The hydrolase phiM is involved in the release of the C12-fatty acyl chain from phiA. The alkylcitrate synthase (ACS) phiJ and the alkylcitrate dehydratase (ACDH) phiI then give rise to decarboxylated monomeric anhydrides by coupling the C12-fatty acyl chain with oxalacetic acid. The cyclase phiC is responsible for the dimerization of the monomeric anhydrides which leads to the production of prephomoidride that contains the characteristic bicyclo[4.3.1]deca-1,6-diene system of phomoidrides. Iterative oxidation catalyzed by the alpha-ketoglutarate-dependent dioxygenase phiK produced then phomoidride A. Finally, the methyltransferase phiE converts phomoidride A to phomoidride B via an acetalization reaction. The phosphatidylethanolamine-binding protein phiB and phiN are not essential for dimerization and their functions have still to be determined. The chain is Highly reducing polyketide synthase phiA from Fungal sp. (strain ATCC 74256).